We begin with the raw amino-acid sequence, 743 residues long: Photosystem I P700 chlorophyll a apoprotein A2 (743 aa).

Helical transmembrane passes span 46–69 (IFAT…FHVA), 135–158 (LYMG…LHLQ), 175–199 (LNHH…HVAI), 273–291 (MAHH…GHMY), 336–359 (LHFQ…QHMY), 375–401 (AALY…IFWV), 423–445 (AIIS…LYVH), and 526–544 (FLVH…LILV). [4Fe-4S] cluster contacts are provided by Cys-568 and Cys-577. Transmembrane regions (helical) follow at residues 584 to 605 (AFYL…YWHW) and 652 to 674 (LSVW…MFLI). Chlorophyll a-binding residues include His-663, Met-671, and Tyr-679. Residue Trp-680 coordinates phylloquinone. Residues 716 to 736 (LVGLTHFTVGYVLTYAAFLIA) traverse the membrane as a helical segment.

The protein belongs to the PsaA/PsaB family. The PsaA/B heterodimer binds the P700 chlorophyll special pair and subsequent electron acceptors. PSI consists of a core antenna complex that captures photons, and an electron transfer chain that converts photonic excitation into a charge separation. The cyanobacterial PSI reaction center is composed of one copy each of PsaA,B,C,D,E,F,I,J,K,L,M and X, and forms trimeric complexes. It depends on PSI electron transfer chain: 5 chlorophyll a, 1 chlorophyll a', 2 phylloquinones and 3 4Fe-4S clusters. PSI core antenna: 90 chlorophyll a, 22 carotenoids, 3 phospholipids and 1 galactolipid. P700 is a chlorophyll a/chlorophyll a' dimer, A0 is one or more chlorophyll a, A1 is one or both phylloquinones and FX is a shared 4Fe-4S iron-sulfur center. as a cofactor.

It localises to the cellular thylakoid membrane. The enzyme catalyses reduced [plastocyanin] + hnu + oxidized [2Fe-2S]-[ferredoxin] = oxidized [plastocyanin] + reduced [2Fe-2S]-[ferredoxin]. Its function is as follows. PsaA and PsaB bind P700, the primary electron donor of photosystem I (PSI), as well as the electron acceptors A0, A1 and FX. PSI is a plastocyanin/cytochrome c6-ferredoxin oxidoreductase, converting photonic excitation into a charge separation, which transfers an electron from the donor P700 chlorophyll pair to the spectroscopically characterized acceptors A0, A1, FX, FA and FB in turn. Oxidized P700 is reduced on the lumenal side of the thylakoid membrane by plastocyanin or cytochrome c6. The sequence is that of Photosystem I P700 chlorophyll a apoprotein A2 from Mastigocladus laminosus (Fischerella sp.).